A 320-amino-acid chain; its full sequence is Malate dehydrogenase (320 aa).

NAD(+) is bound by residues Gly-10 to Gly-15 and Asp-34. Substrate is bound by residues Arg-83 and Arg-89. Residues Asn-96 and Ile-119–Asn-121 contribute to the NAD(+) site. Residues Asn-121 and Arg-152 each contribute to the substrate site. Catalysis depends on His-176, which acts as the Proton acceptor.

The protein belongs to the LDH/MDH superfamily. MDH type 3 family.

It carries out the reaction (S)-malate + NAD(+) = oxaloacetate + NADH + H(+). Its function is as follows. Catalyzes the reversible oxidation of malate to oxaloacetate. The protein is Malate dehydrogenase of Methylobacterium sp. (strain 4-46).